The chain runs to 1702 residues: DNA polymerase (1702 aa).

DOD-type homing endonuclease domains are found at residues 776–909 (LLGY…SLGI) and 1229–1368 (LVGL…IVGI).

Belongs to the DNA polymerase type-B family. In terms of processing, this protein undergoes a protein self splicing that involves a post-translational excision of the two intervening regions (inteins) followed by peptide ligation.

It catalyses the reaction DNA(n) + a 2'-deoxyribonucleoside 5'-triphosphate = DNA(n+1) + diphosphate. In terms of biological role, in addition to polymerase activity, this DNA polymerase exhibits 3' to 5' exonuclease activity. Functionally, intein encoded endonucleases are thought to mediate intein mobility by site-specific recombination initiated by endonuclease cleavage at the 'homing site' in gene that lack the intein. This chain is DNA polymerase (pol), found in Thermococcus litoralis.